Reading from the N-terminus, the 260-residue chain is Acetylglutamate kinase (260 aa).

Residues 46–47 (GG), arginine 68, and asparagine 160 each bind substrate.

This sequence belongs to the acetylglutamate kinase family. ArgB subfamily.

It localises to the cytoplasm. The enzyme catalyses N-acetyl-L-glutamate + ATP = N-acetyl-L-glutamyl 5-phosphate + ADP. The protein operates within amino-acid biosynthesis; L-arginine biosynthesis; N(2)-acetyl-L-ornithine from L-glutamate: step 2/4. Its function is as follows. Catalyzes the ATP-dependent phosphorylation of N-acetyl-L-glutamate. The chain is Acetylglutamate kinase from Shewanella putrefaciens (strain CN-32 / ATCC BAA-453).